Consider the following 123-residue polypeptide: Small ribosomal subunit protein uS12 (123 aa).

A disordered region spans residues 1–28 (MPTIQQLIRTERSKVQKKTKSPALKQCP). Residue aspartate 89 is modified to 3-methylthioaspartic acid. The disordered stretch occupies residues 104–123 (ATGVKDRKQGRSKYGTKRPK). The span at 113–123 (GRSKYGTKRPK) shows a compositional bias: basic residues.

This sequence belongs to the universal ribosomal protein uS12 family. In terms of assembly, part of the 30S ribosomal subunit. Contacts proteins S8 and S17. May interact with IF1 in the 30S initiation complex.

Functionally, with S4 and S5 plays an important role in translational accuracy. Interacts with and stabilizes bases of the 16S rRNA that are involved in tRNA selection in the A site and with the mRNA backbone. Located at the interface of the 30S and 50S subunits, it traverses the body of the 30S subunit contacting proteins on the other side and probably holding the rRNA structure together. The combined cluster of proteins S8, S12 and S17 appears to hold together the shoulder and platform of the 30S subunit. In Gloeothece citriformis (strain PCC 7424) (Cyanothece sp. (strain PCC 7424)), this protein is Small ribosomal subunit protein uS12.